The chain runs to 128 residues: Large ribosomal subunit protein bL19 (128 aa).

The protein belongs to the bacterial ribosomal protein bL19 family.

Functionally, this protein is located at the 30S-50S ribosomal subunit interface and may play a role in the structure and function of the aminoacyl-tRNA binding site. The chain is Large ribosomal subunit protein bL19 from Paraburkholderia xenovorans (strain LB400).